A 523-amino-acid polypeptide reads, in one-letter code: Maintenance of mitochondrial morphology protein 1 (523 aa).

Residues 1-43 (MAGSTSASLQTPYFPSSTQINPVRVDHTLPLPPSQPSLSFTQG) lie on the Lumenal side of the membrane. Residues 44 to 64 (LLVGQLSVVLLIGAFIKFFIF) traverse the membrane as a helical segment. Topologically, residues 65-523 (GEAPPPPSRG…GSMPDTVTET (459 aa)) are cytoplasmic. 5 disordered regions span residues 70 to 118 (PPSR…SSST), 128 to 147 (YYSATPTHPTPKHGRPRLYH), 295 to 349 (TSDQ…SKHG), 420 to 474 (RTGL…DRGL), and 492 to 523 (GGHQNQSGRDGGRGGNEQFAMPGSMPDTVTET). Composition is skewed to polar residues over residues 74-96 (GLSNRTSTHPRSYSINAASTDSS) and 105-118 (STSNILRPVPSSST). Positions 137-147 (TPKHGRPRLYH) are enriched in basic residues. In terms of domain architecture, SMP-LTD spans 151-412 (QPESLDWFNV…EPRVQVVGLP (262 aa)). The segment covering 295–312 (TSDQTMSPIPTPHDTTSE) has biased composition (polar residues). Over residues 449-468 (GVSGGGGSGGGSGGGGGGMR) the composition is skewed to gly residues.

This sequence belongs to the MMM1 family. In terms of assembly, homodimer. Component of the ER-mitochondria encounter structure (ERMES) or MDM complex, composed of MMM1, MDM10, MDM12 and MDM34. An MMM1 homodimer associates with one molecule of MDM12 on each side in a pairwise head-to-tail manner, and the SMP-LTD domains of MMM1 and MDM12 generate a continuous hydrophobic tunnel for phospholipid trafficking.

It is found in the endoplasmic reticulum membrane. Component of the ERMES/MDM complex, which serves as a molecular tether to connect the endoplasmic reticulum (ER) and mitochondria. Components of this complex are involved in the control of mitochondrial shape and protein biogenesis, and function in nonvesicular lipid trafficking between the ER and mitochondria. The MDM12-MMM1 subcomplex functions in the major beta-barrel assembly pathway that is responsible for biogenesis of all outer membrane beta-barrel proteins, and acts in a late step after the SAM complex. The MDM10-MDM12-MMM1 subcomplex further acts in the TOM40-specific pathway after the action of the MDM12-MMM1 complex. Essential for establishing and maintaining the structure of mitochondria and maintenance of mtDNA nucleoids. This is Maintenance of mitochondrial morphology protein 1 from Paracoccidioides lutzii (strain ATCC MYA-826 / Pb01) (Paracoccidioides brasiliensis).